The following is a 40-amino-acid chain: Photosystem II reaction center protein Y (40 aa).

The chain crosses the membrane as a helical span at residues 4-22 (LLVITLPILAAIGWVTLNI).

The protein belongs to the PsbY family. PSII is composed of 1 copy each of membrane proteins PsbA, PsbB, PsbC, PsbD, PsbE, PsbF, PsbH, PsbI, PsbJ, PsbK, PsbL, PsbM, PsbT, PsbX, PsbY, Psb30/Ycf12, peripheral proteins PsbO, CyanoQ (PsbQ), PsbU, PsbV and a large number of cofactors. It forms dimeric complexes.

It is found in the cellular thylakoid membrane. Loosely associated component of the core of photosystem II (PSII), it is not always seen in crystals. PSII is a light-driven water plastoquinone oxidoreductase, using light energy to abstract electrons from H(2)O, generating a proton gradient subsequently used for ATP formation. The polypeptide is Photosystem II reaction center protein Y (Prochlorococcus marinus (strain SARG / CCMP1375 / SS120)).